We begin with the raw amino-acid sequence, 358 residues long: tRNA N6-adenosine threonylcarbamoyltransferase (358 aa).

Residues His118 and His122 each coordinate Fe cation. Substrate contacts are provided by residues 143 to 147 (IVSGG), Asp176, Gly189, and Asn298. Asp326 contributes to the Fe cation binding site.

This sequence belongs to the KAE1 / TsaD family. Fe(2+) serves as cofactor.

The protein localises to the cytoplasm. It catalyses the reaction L-threonylcarbamoyladenylate + adenosine(37) in tRNA = N(6)-L-threonylcarbamoyladenosine(37) in tRNA + AMP + H(+). Functionally, required for the formation of a threonylcarbamoyl group on adenosine at position 37 (t(6)A37) in tRNAs that read codons beginning with adenine. Is involved in the transfer of the threonylcarbamoyl moiety of threonylcarbamoyl-AMP (TC-AMP) to the N6 group of A37, together with TsaE and TsaB. TsaD likely plays a direct catalytic role in this reaction. This chain is tRNA N6-adenosine threonylcarbamoyltransferase, found in Rhodopirellula baltica (strain DSM 10527 / NCIMB 13988 / SH1).